Here is a 40-residue protein sequence, read N- to C-terminus: Photosystem I reaction center subunit IX (40 aa).

Residues 4–24 (FFESWPMAAVLWVWLTAGIIV) traverse the membrane as a helical segment.

It belongs to the PsaJ family.

It localises to the cellular thylakoid membrane. Its function is as follows. May help in the organization of the PsaE and PsaF subunits. The sequence is that of Photosystem I reaction center subunit IX from Prochlorococcus marinus (strain MIT 9313).